A 498-amino-acid chain; its full sequence is UDP-N-acetylmuramoyl-L-alanyl-D-glutamate--2,6-diaminopimelate ligase (498 aa).

A UDP-N-acetyl-alpha-D-muramoyl-L-alanyl-D-glutamate-binding site is contributed by serine 29. 120–126 (GTDGKTS) is an ATP binding site. UDP-N-acetyl-alpha-D-muramoyl-L-alanyl-D-glutamate-binding positions include 162 to 163 (TT), serine 189, glutamine 195, and arginine 197. Position 229 is an N6-carboxylysine (lysine 229). Meso-2,6-diaminopimelate is bound by residues arginine 392, 416–419 (DNPR), glycine 466, and glutamate 470. Residues 416–419 (DNPR) carry the Meso-diaminopimelate recognition motif motif.

The protein belongs to the MurCDEF family. MurE subfamily. It depends on Mg(2+) as a cofactor. Carboxylation is probably crucial for Mg(2+) binding and, consequently, for the gamma-phosphate positioning of ATP.

It localises to the cytoplasm. It catalyses the reaction UDP-N-acetyl-alpha-D-muramoyl-L-alanyl-D-glutamate + meso-2,6-diaminopimelate + ATP = UDP-N-acetyl-alpha-D-muramoyl-L-alanyl-gamma-D-glutamyl-meso-2,6-diaminopimelate + ADP + phosphate + H(+). It participates in cell wall biogenesis; peptidoglycan biosynthesis. In terms of biological role, catalyzes the addition of meso-diaminopimelic acid to the nucleotide precursor UDP-N-acetylmuramoyl-L-alanyl-D-glutamate (UMAG) in the biosynthesis of bacterial cell-wall peptidoglycan. The polypeptide is UDP-N-acetylmuramoyl-L-alanyl-D-glutamate--2,6-diaminopimelate ligase (Alkalilimnicola ehrlichii (strain ATCC BAA-1101 / DSM 17681 / MLHE-1)).